The sequence spans 101 residues: Large ribosomal subunit protein uL24 (101 aa).

This sequence belongs to the universal ribosomal protein uL24 family. As to quaternary structure, part of the 50S ribosomal subunit.

In terms of biological role, one of two assembly initiator proteins, it binds directly to the 5'-end of the 23S rRNA, where it nucleates assembly of the 50S subunit. One of the proteins that surrounds the polypeptide exit tunnel on the outside of the subunit. The chain is Large ribosomal subunit protein uL24 from Streptococcus pyogenes serotype M2 (strain MGAS10270).